The sequence spans 425 residues: MTSFFDSPSKVIGASIALRAVLLVYGAWQDAHSPIKYTDIDYFVFTDAARYVSRGASPYARDTYRYTPLLAWLLLPTTWDSIPGFFAFGKALFALADVVAGWLIAKVLVSAYGMSPSRALKYASVWLLNPMVANISTRGSSEGLLGVLVVGLLWAVLSRRVSLAGVILGLGVHFKIYPFIYGPAVVWWFDAERDGSGSPRGTATARAAREKDDGQDGQGILSKAVDFLTPARIHLTLVALATFSALNVSMYILYDLPFAQNTYLHHLTRIDHRHNFSPYSTLLYLSAAGGARTAFESLAFIPQLLLSVVVIPLVLGKKSLAGTMLAQTFAFVTFNKVCTSQYFLWYLIFLPFYLPSSSLMKNPRKGILVGLLWVIAQALWLQQGYNLEFLGLSSFVPGLFLASLFFFAVNVWILGIIVEDVGGSA.

9 helical membrane passes run 11–31, 85–105, 144–164, 166–186, 233–253, 295–315, 340–360, 367–387, and 398–418; these read VIGA…WQDA, FFAF…WLIA, LLGV…VSLA, VILG…PAVV, IHLT…MYIL, FESL…PLVL, SQYF…SSLM, ILVG…GYNL, and GLFL…GIIV.

This sequence belongs to the PIGM family.

The protein localises to the endoplasmic reticulum membrane. It participates in glycolipid biosynthesis; glycosylphosphatidylinositol-anchor biosynthesis. Its function is as follows. Mannosyltransferase involved in glycosylphosphatidylinositol-anchor biosynthesis. Transfers the first alpha-1,4-mannose to GlcN-acyl-PI during GPI precursor assembly. Required for cell wall integrity. This is GPI mannosyltransferase 1 (gpi14) from Aspergillus fumigatus (strain ATCC MYA-4609 / CBS 101355 / FGSC A1100 / Af293) (Neosartorya fumigata).